Reading from the N-terminus, the 333-residue chain is Adenosine deaminase (333 aa).

Positions 12 and 14 each coordinate Zn(2+). Positions 14 and 16 each coordinate substrate. Residues 14–16 (HLD), serine 141, and glycine 170 each bind pentostatin. Glycine 170 is a binding site for substrate. Histidine 197 contributes to the Zn(2+) binding site. Positions 200, 221, and 278 each coordinate pentostatin. Residue glutamate 200 is the Proton donor of the active site. Aspartate 278 serves as a coordination point for Zn(2+). Residue aspartate 279 participates in substrate binding.

The protein belongs to the metallo-dependent hydrolases superfamily. Adenosine and AMP deaminases family. Adenosine deaminase subfamily. Zn(2+) serves as cofactor.

The enzyme catalyses adenosine + H2O + H(+) = inosine + NH4(+). It catalyses the reaction 2'-deoxyadenosine + H2O + H(+) = 2'-deoxyinosine + NH4(+). Functionally, catalyzes the hydrolytic deamination of adenosine and 2-deoxyadenosine. This chain is Adenosine deaminase, found in Salmonella typhimurium (strain LT2 / SGSC1412 / ATCC 700720).